The primary structure comprises 342 residues: UDP-3-O-(3-hydroxymyristoyl)glucosamine N-acyltransferase (342 aa).

The Proton acceptor role is filled by His239.

The protein belongs to the transferase hexapeptide repeat family. LpxD subfamily. As to quaternary structure, homotrimer.

The catalysed reaction is a UDP-3-O-[(3R)-3-hydroxyacyl]-alpha-D-glucosamine + a (3R)-hydroxyacyl-[ACP] = a UDP-2-N,3-O-bis[(3R)-3-hydroxyacyl]-alpha-D-glucosamine + holo-[ACP] + H(+). The enzyme catalyses UDP-3-O-[(3R)-3-hydroxytetradecanoyl]-alpha-D-glucosamine + (3R)-hydroxytetradecanoyl-[ACP] = UDP-2-N,3-O-bis[(3R)-3-hydroxytetradecanoyl]-alpha-D-glucosamine + holo-[ACP] + H(+). The protein operates within glycolipid biosynthesis; lipid IV(A) biosynthesis; lipid IV(A) from (3R)-3-hydroxytetradecanoyl-[acyl-carrier-protein] and UDP-N-acetyl-alpha-D-glucosamine: step 3/6. In terms of biological role, catalyzes the N-acylation of UDP-3-O-(hydroxytetradecanoyl)glucosamine using 3-hydroxytetradecanoyl-ACP as the acyl donor. Is involved in the biosynthesis of lipid A, a phosphorylated glycolipid that anchors the lipopolysaccharide to the outer membrane of the cell. In Photorhabdus laumondii subsp. laumondii (strain DSM 15139 / CIP 105565 / TT01) (Photorhabdus luminescens subsp. laumondii), this protein is UDP-3-O-(3-hydroxymyristoyl)glucosamine N-acyltransferase.